Reading from the N-terminus, the 200-residue chain is Max dimerization protein 3 (200 aa).

2 disordered regions span residues Ser-31–Arg-56 and Arg-133–Leu-164. The bHLH domain occupies Asn-54 to Leu-106.

Efficient DNA binding requires dimerization with another bHLH protein. Binds DNA as a heterodimer with MAX. In terms of tissue distribution, expressed broadly throughout the CNS and the eye, starting at neurula stages.

It localises to the nucleus. Transcriptional repressor. Binds with MAX to form a sequence-specific DNA-binding protein complex which recognizes the core sequence 5'-CAC[GA]TG-3'. The sequence is that of Max dimerization protein 3 (mxd3) from Xenopus laevis (African clawed frog).